Consider the following 483-residue polypeptide: Glutamate--tRNA ligase (483 aa).

Positions 11 to 21 match the 'HIGH' region motif; that stretch reads PSPTGHLHIGN. Zn(2+) is bound by residues C108, C110, H135, and D137. Positions 252–256 match the 'KMSKS' region motif; that stretch reads KLSKR. K255 lines the ATP pocket.

Belongs to the class-I aminoacyl-tRNA synthetase family. Glutamate--tRNA ligase type 1 subfamily. As to quaternary structure, monomer. Requires Zn(2+) as cofactor.

It is found in the cytoplasm. The enzyme catalyses tRNA(Glu) + L-glutamate + ATP = L-glutamyl-tRNA(Glu) + AMP + diphosphate. In terms of biological role, catalyzes the attachment of glutamate to tRNA(Glu) in a two-step reaction: glutamate is first activated by ATP to form Glu-AMP and then transferred to the acceptor end of tRNA(Glu). This is Glutamate--tRNA ligase from Bacillus subtilis (strain 168).